Consider the following 126-residue polypeptide: MPFNGTWQVYSQENYEAFLRAVGLPEDIINVAKDINPIIEIQQNGDNFVVTSKTPNQSVTNSFTIGKEAEITSMGGKKIKCTVVLEGGKLVSKTDQFSHIQEVKGNEMVETLTVGGATLIRRSKRV.

Cholate contacts are provided by residues 54 to 56 (TPN), 99 to 101 (HIQ), and Arg121.

Belongs to the calycin superfamily. Fatty-acid binding protein (FABP) family.

It localises to the cytoplasm. Binds free fatty acids and their coenzyme A derivatives, bilirubin, and some other small molecules in the cytoplasm. May be involved in intracellular lipid transport. The specificity of axolotl L-FABP differs from that of LB-FABP. Binds 2 ligands per protein molecule. This Ambystoma mexicanum (Axolotl) protein is Fatty acid-binding protein 2, liver.